A 174-amino-acid chain; its full sequence is CDP-archaeol synthase (174 aa).

The next 5 membrane-spanning stretches (helical) occupy residues 14–34 (ILEA…PVVA), 59–79 (IEGL…AALA), 83–103 (MLLA…DMAG), 118–138 (APLL…IALG), and 149–169 (AAAA…LLGL).

The protein belongs to the CDP-archaeol synthase family. Mg(2+) serves as cofactor.

It localises to the cell membrane. It catalyses the reaction 2,3-bis-O-(geranylgeranyl)-sn-glycerol 1-phosphate + CTP + H(+) = CDP-2,3-bis-O-(geranylgeranyl)-sn-glycerol + diphosphate. It functions in the pathway membrane lipid metabolism; glycerophospholipid metabolism. Catalyzes the formation of CDP-2,3-bis-(O-geranylgeranyl)-sn-glycerol (CDP-archaeol) from 2,3-bis-(O-geranylgeranyl)-sn-glycerol 1-phosphate (DGGGP) and CTP. This reaction is the third ether-bond-formation step in the biosynthesis of archaeal membrane lipids. This Aeropyrum pernix (strain ATCC 700893 / DSM 11879 / JCM 9820 / NBRC 100138 / K1) protein is CDP-archaeol synthase.